A 572-amino-acid chain; its full sequence is MPRKMFSCDFETTTKLDDCRVWAYGYMEIGNLDNYKIGNSLDEFMQWVMEIQADLYFHNLKFDGAFIVNWLEHHGFKWSNEGLPNTYNTIISKMGQWYMIDICFGYKGKRKLHTVIYDSLKKLPFPVKKIAKDFQLPLLKGDIDYHAERPVGHEITPEEYEYIKNDIEIIARALDIQFKQGLDRMTAGSDSLKGFKDILSTKKFNKVFPKLSLPMDKEIRRAYRGGFTWLNDKYKEKEIGEGMVFDVNSLYPSQMYSRPLPYGAPIVFQGKYEKDEQYPLYIQRIRFEFELKEGYIPTIQIKKNPFFKGNEYLKNSGAEPVELYLTNVDLELIQEHYEMYNVEYIDGFKFREKTGLFKEFIDKWTYVKTHEKGAKKQLAKLMFDSLYGKFASNPDVTGKVPYLKEDGSLGFRVGDEEYKDPVYTPMGVFITAWARFTTITAAQACYDRIIYCDTDSIHLTGTEVPEIIKDIVDPKKLGYWAHESTFKRAKYLRQKTYIQDIYAKEVDGKLIECSPDEATTTKFSVKCAGMTDTIKKKVTFDNFRVGFSSTGKPKPVQVNGGVVLVDSVFTIK.

Residues 1 to 222 (MPRKMFSCDF…LPMDKEIRRA (222 aa)) form a 3'-5' exonuclease and strand displacement activities region. The interaction with the primer terminal protein stretch occupies residues 56–66 (YFHNLKFDGAF). Residues Asp-142 and Asp-166 each coordinate Mg(2+). The segment at 223-226 (YRGG) is DNA-binding; Involved in the formation of a stable complex between TP and phi29 DNA polymerase. Positions 227–572 (FTWLNDKYKE…VLVDSVFTIK (346 aa)) are initiation, polymerization and pyrophosphorolytic activities. Positions 246 and 247 each coordinate Mg(2+). 3 residues coordinate 5-methyl-UTP: Tyr-251, Lys-368, and Lys-380. Residues Asp-453 and Asp-455 each coordinate Mg(2+). Asp-455 contributes to the 5-methyl-UTP binding site.

It belongs to the DNA polymerase type-B family. In terms of assembly, interacts with the primer terminal protein; this interaction allows the initiation of TP-primed DNA replication at both viral DNA ends. Interacts with DNA. Mg(2+) serves as cofactor.

It catalyses the reaction DNA(n) + a 2'-deoxyribonucleoside 5'-triphosphate = DNA(n+1) + diphosphate. Its function is as follows. Polymerase responsible for protein-primed viral DNA replication by strand displacement with high processivity and fidelity. To start replication, the DNA polymerase forms a heterodimer with a free primer terminal protein (TP), recognizes the replication origins at both 5' ends of the linear chromosome, and initiates replication using as primer the OH-group of Ser-232 of the TP. This polymerase possesses three enzymatic activities: DNA synthesis (polymerase), primer terminal protein (TP) deoxynucleotidylation, which is the formation of a covalent linkage (phosphoester) between the hydroxyl group of a specific serine residue in TP and 5'-dAMP, a reaction directed by the second T at the 3' end, and 3' to 5' exonuclease activity. Exonuclease activity has a proofreading purpose. This Bacillus phage B103 (Bacteriophage B103) protein is DNA polymerase (2).